We begin with the raw amino-acid sequence, 441 residues long: Glutamate-1-semialdehyde 2,1-aminomutase (441 aa).

Residue lysine 270 is modified to N6-(pyridoxal phosphate)lysine.

Belongs to the class-III pyridoxal-phosphate-dependent aminotransferase family. HemL subfamily. Homodimer. The cofactor is pyridoxal 5'-phosphate.

The protein resides in the cytoplasm. The catalysed reaction is (S)-4-amino-5-oxopentanoate = 5-aminolevulinate. It participates in porphyrin-containing compound metabolism; protoporphyrin-IX biosynthesis; 5-aminolevulinate from L-glutamyl-tRNA(Glu): step 2/2. This is Glutamate-1-semialdehyde 2,1-aminomutase (hemL) from Propionibacterium freudenreichii subsp. freudenreichii.